A 78-amino-acid chain; its full sequence is Surfactant-associated protein 2 (78 aa).

The N-terminal stretch at 1–19 (MGSGLPLVLLLTLLGSSHG) is a signal peptide. Asn-37 carries an N-linked (GlcNAc...) asparagine glycan.

In terms of processing, N-glycosylated. Predominantly expressed in lung, where it is detected in type II pneumocytes in the alveolus, and in nonciliated epithelium in bronchioli (at protein level). Also detected at lower levels in cervix, esophagus, stomach, testis and kidney.

The protein resides in the secreted. It is found in the cytoplasmic vesicle. It localises to the secretory vesicle. Its subcellular location is the golgi apparatus. Functionally, putative surfactant protein. This chain is Surfactant-associated protein 2 (SFTA2), found in Homo sapiens (Human).